The primary structure comprises 434 residues: 5'-deoxyadenosine deaminase (434 aa).

The Zn(2+) site is built by H63 and H65. Residues E92 and H184 each contribute to the substrate site. H211 provides a ligand contact to Zn(2+). Substrate contacts are provided by E214 and D299. Residue D299 coordinates Zn(2+).

The protein belongs to the metallo-dependent hydrolases superfamily. MTA/SAH deaminase family. Homotetramer. Requires Zn(2+) as cofactor.

It carries out the reaction 5'-deoxyadenosine + H2O + H(+) = 5'-deoxyinosine + NH4(+). It catalyses the reaction S-adenosyl-L-homocysteine + H2O + H(+) = S-inosyl-L-homocysteine + NH4(+). The catalysed reaction is S-methyl-5'-thioadenosine + H2O + H(+) = S-methyl-5'-thioinosine + NH4(+). The enzyme catalyses adenosine + H2O + H(+) = inosine + NH4(+). The protein operates within amino-acid biosynthesis; S-adenosyl-L-methionine biosynthesis. Functionally, catalyzes the deamination of three SAM-derived enzymatic products, namely 5'-deoxyadenosine, S-adenosyl-L-homocysteine, and 5'-methylthioadenosine, to produce the inosine analogs. Can also deaminate adenosine. The preferred substrate for this enzyme is 5'-deoxyadenosine, but all these substrates are efficiently deaminated. Likely functions in a S-adenosyl-L-methionine (SAM) recycling pathway from S-adenosyl-L-homocysteine (SAH) produced from SAM-dependent methylation reactions. May also be involved in the recycling of 5'-deoxyadenosine, whereupon the 5'-deoxyribose moiety of 5'-deoxyinosine is further metabolized to deoxyhexoses used for the biosynthesis of aromatic amino acids in methanogens. The chain is 5'-deoxyadenosine deaminase from Methanococcoides burtonii (strain DSM 6242 / NBRC 107633 / OCM 468 / ACE-M).